Consider the following 645-residue polypeptide: MTDLLLDGSEADNAQTVLNAARIELLSPRLANQIAAGEVVERPASVIKELLENSLDSGARRIDIDVEQAGIKLLKVRDDGGGISSDDLPLALARHATSKIRDLEDLERVMSLGFRGEALASISSVARLTLTSRTRDADQAWQVETEGRDMDARVQPAAHPVGTSVEVRDLFFNTPARRKFLKAEKTEFDHLHEVIKRMALARFDVAFHLRHNGKTVLSLHEAHDDTARARRVSAICGPGFLEQALPIEIERNGLHLWGWVGLPTFSRSQADLQYFFVNGRAVRDKLVAHAVRQAYRDVLFNGRHPTFVLFFEVDPAAVDVNVHPTKHEVRFRDGRMVHDFLYGTLHRALGDVRPENQLGGSVPAAAEPRPTGPDAGEFGPQGEMRLANNVLEQPQGEPFARPAGGGSGSGYQYSPRPTTGVPVAEAQSAYREFFAPLPGTTPSALPESPSDIPPLGYALAQLKGIYILAENAHGLVLVDMHAAHERIMYERLKIAMANEGLSGQPLLVPESIAVSQREADCAEEHITTFQRLGFELQRLGPETLAIRQIPALLKQAEANRLVSDVLADLMEYGTSDRVQAHMNELLGTMACHGAIRANRRLAIPEMNGLLRDMENTERSGQCNHGRPTWTQMGLSDLDKLFLRGQ.

Disordered regions lie at residues Arg-353–Gln-381 and Gln-395–Gly-420.

This sequence belongs to the DNA mismatch repair MutL/HexB family.

This protein is involved in the repair of mismatches in DNA. It is required for dam-dependent methyl-directed DNA mismatch repair. May act as a 'molecular matchmaker', a protein that promotes the formation of a stable complex between two or more DNA-binding proteins in an ATP-dependent manner without itself being part of a final effector complex. The sequence is that of DNA mismatch repair protein MutL from Pseudomonas syringae pv. tomato (strain ATCC BAA-871 / DC3000).